The chain runs to 506 residues: Maturase K (506 aa).

Belongs to the intron maturase 2 family. MatK subfamily.

It localises to the plastid. The protein resides in the chloroplast. Usually encoded in the trnK tRNA gene intron. Probably assists in splicing its own and other chloroplast group II introns. In Rhododendron tsusiophyllum (Rhododendron), this protein is Maturase K.